Consider the following 362-residue polypeptide: MSTASVMDLVRDDLRAFAGYASARTSALQGDVWLNANESAWGNPADPDASTRRYPDPQPKGLRAALAQLYGCAPEQLLIGRGSDEAIDLLVRGLCVPERDAVVVTPPVFGMYAVCARLQNAPLVEVPLVDGADGLHADVPAIVQAALDAKAKLVFLCSPSNPAGSAIPLAEIEAALQALQGKAVVVVDEAYGEFSDVPSAIGLLARYDNLAVLRTLSKAHALAAARIGSLIANAELIALLRRCQAPYPVPTPCAVMAEQALSAPALAVTQRRVTEIRAERARLHAALVQVAGVRQVYPSQGNFLLVRFDDAEAAFQALLEAGVVVRDQRAVPRLSDALRITIGTPDQNDRVLGALQRKQEAA.

K218 is subject to N6-(pyridoxal phosphate)lysine.

Belongs to the class-II pyridoxal-phosphate-dependent aminotransferase family. Histidinol-phosphate aminotransferase subfamily. In terms of assembly, homodimer. Pyridoxal 5'-phosphate is required as a cofactor.

The enzyme catalyses L-histidinol phosphate + 2-oxoglutarate = 3-(imidazol-4-yl)-2-oxopropyl phosphate + L-glutamate. Its pathway is amino-acid biosynthesis; L-histidine biosynthesis; L-histidine from 5-phospho-alpha-D-ribose 1-diphosphate: step 7/9. The polypeptide is Histidinol-phosphate aminotransferase (Xanthomonas campestris pv. campestris (strain 8004)).